The chain runs to 393 residues: F-box protein KIB4 (393 aa).

Positions A12 to A59 constitute an F-box domain.

Its subcellular location is the cytoplasm. It localises to the nucleus. The protein localises to the nucleolus. In terms of biological role, component of SCF(ASK-cullin-F-box) E3 ubiquitin ligase complexes, which may mediate the ubiquitination and subsequent proteasomal degradation of target proteins. Required for brassinosteroid (BR) signal transduction. Mediates ASK7/BIN2/SK21 inactivation both by competing with substrate binding (e.g. BZR1) and by promoting its ubiquitination and subsequent proteasomal degradation. This Arabidopsis thaliana (Mouse-ear cress) protein is F-box protein KIB4.